The primary structure comprises 245 residues: tRNA1(Val) (adenine(37)-N6)-methyltransferase (245 aa).

It belongs to the methyltransferase superfamily. tRNA (adenine-N(6)-)-methyltransferase family.

The protein resides in the cytoplasm. It catalyses the reaction adenosine(37) in tRNA1(Val) + S-adenosyl-L-methionine = N(6)-methyladenosine(37) in tRNA1(Val) + S-adenosyl-L-homocysteine + H(+). In terms of biological role, specifically methylates the adenine in position 37 of tRNA(1)(Val) (anticodon cmo5UAC). The polypeptide is tRNA1(Val) (adenine(37)-N6)-methyltransferase (Escherichia coli O7:K1 (strain IAI39 / ExPEC)).